A 510-amino-acid chain; its full sequence is ATP synthase subunit alpha, chloroplastic (510 aa).

Residue 170 to 177 participates in ATP binding; that stretch reads GDRQTGKT.

This sequence belongs to the ATPase alpha/beta chains family. In terms of assembly, F-type ATPases have 2 components, CF(1) - the catalytic core - and CF(0) - the membrane proton channel. CF(1) has five subunits: alpha(3), beta(3), gamma(1), delta(1), epsilon(1). CF(0) has four main subunits: a, b, b' and c.

It is found in the plastid. Its subcellular location is the chloroplast thylakoid membrane. It carries out the reaction ATP + H2O + 4 H(+)(in) = ADP + phosphate + 5 H(+)(out). Its function is as follows. Produces ATP from ADP in the presence of a proton gradient across the membrane. The alpha chain is a regulatory subunit. The protein is ATP synthase subunit alpha, chloroplastic of Phaseolus vulgaris (Kidney bean).